A 474-amino-acid chain; its full sequence is Aspartate ammonia-lyase (474 aa).

The L-aspartate site is built by T105, S144, T145, N146, and T191. The interval 322 to 331 is SS loop; that stretch reads GSSIMPGKVN. S323 serves as the catalytic Proton acceptor. 2 residues coordinate L-aspartate: S324 and K329.

The protein belongs to the class-II fumarase/aspartase family. Aspartase subfamily. Homotetramer.

The enzyme catalyses L-aspartate = fumarate + NH4(+). Its function is as follows. Lyase involved in the degradation of canavanine, the delta-oxa-analog of arginine, allowing growth on canavanine as sole nitrogen and carbon source. Probably catalyzes the conversion of L-aspartate to fumarate and ammonia. This is Aspartate ammonia-lyase from Pseudomonas canavaninivorans.